The sequence spans 232 residues: Anti-sigma-K factor RskA (232 aa).

The Cytoplasmic portion of the chain corresponds to 1–91 (MTEPTDFQLL…QSRRQPRWRT (91 aa)). Residues 92-112 (AVFASAAAIAVGLGAFGLGVL) traverse the membrane as a helical segment. The Extracellular portion of the chain corresponds to 113-232 (TRPSASPTVA…GTVLAELPLR (120 aa)).

The protein belongs to the anti-sigma-K factor family.

It localises to the cell membrane. In terms of biological role, an anti-sigma factor for extracytoplasmic function (ECF) sigma factor SigK. ECF sigma factors are held in an inactive form by an anti-sigma factor until released by regulated intramembrane proteolysis (RIP). RIP occurs when an extracytoplasmic signal triggers a concerted proteolytic cascade to transmit information and elicit cellular responses. The membrane-spanning regulatory substrate protein is first cut extracytoplasmically (site-1 protease, S1P), then within the membrane itself (site-2 protease, S2P, Rip1), while cytoplasmic proteases finish degrading the regulatory protein, liberating the sigma factor. This Mycobacterium ulcerans (strain Agy99) protein is Anti-sigma-K factor RskA (rskA).